The primary structure comprises 402 residues: ORC1-type DNA replication protein 17 (402 aa).

2 residues coordinate ATP: Tyr223 and Arg235.

Belongs to the CDC6/cdc18 family.

In terms of biological role, involved in regulation of DNA replication. The protein is ORC1-type DNA replication protein 17 (cdc6q) of Haloarcula marismortui (strain ATCC 43049 / DSM 3752 / JCM 8966 / VKM B-1809) (Halobacterium marismortui).